Here is a 400-residue protein sequence, read N- to C-terminus: tRNA(Met) cytidine acetate ligase (400 aa).

ATP contacts are provided by residues 7–20 (IVEY…HQYH), Gly101, Asn162, and Arg187.

Belongs to the TmcAL family.

Its subcellular location is the cytoplasm. It catalyses the reaction cytidine(34) in elongator tRNA(Met) + acetate + ATP = N(4)-acetylcytidine(34) in elongator tRNA(Met) + AMP + diphosphate. Catalyzes the formation of N(4)-acetylcytidine (ac(4)C) at the wobble position of elongator tRNA(Met), using acetate and ATP as substrates. First activates an acetate ion to form acetyladenylate (Ac-AMP) and then transfers the acetyl group to tRNA to form ac(4)C34. This chain is tRNA(Met) cytidine acetate ligase, found in Oceanobacillus iheyensis (strain DSM 14371 / CIP 107618 / JCM 11309 / KCTC 3954 / HTE831).